Here is a 675-residue protein sequence, read N- to C-terminus: DNA ligase (675 aa).

Residues Asp-35 to Asp-39, Ser-84 to Leu-85, and Glu-116 each bind NAD(+). The active-site N6-AMP-lysine intermediate is Lys-118. 4 residues coordinate NAD(+): Arg-139, Glu-180, Lys-296, and Lys-320. Residues Cys-414, Cys-417, Cys-432, and Cys-437 each coordinate Zn(2+). Residues Pro-597–Met-675 enclose the BRCT domain.

The protein belongs to the NAD-dependent DNA ligase family. LigA subfamily. The cofactor is Mg(2+). Mn(2+) is required as a cofactor.

The catalysed reaction is NAD(+) + (deoxyribonucleotide)n-3'-hydroxyl + 5'-phospho-(deoxyribonucleotide)m = (deoxyribonucleotide)n+m + AMP + beta-nicotinamide D-nucleotide.. Its function is as follows. DNA ligase that catalyzes the formation of phosphodiester linkages between 5'-phosphoryl and 3'-hydroxyl groups in double-stranded DNA using NAD as a coenzyme and as the energy source for the reaction. It is essential for DNA replication and repair of damaged DNA. This chain is DNA ligase, found in Syntrophobacter fumaroxidans (strain DSM 10017 / MPOB).